A 309-amino-acid polypeptide reads, in one-letter code: Glutaminase (309 aa).

Substrate is bound by residues Ser64, Asn114, Glu160, Asn167, Tyr191, Tyr243, and Val261.

This sequence belongs to the glutaminase family. Homotetramer.

It catalyses the reaction L-glutamine + H2O = L-glutamate + NH4(+). The sequence is that of Glutaminase from Rhizobium leguminosarum bv. trifolii (strain WSM2304).